The primary structure comprises 155 residues: NADPH-dependent 7-cyano-7-deazaguanine reductase (155 aa).

Cys53 (thioimide intermediate) is an active-site residue. Residue Asp60 is the Proton donor of the active site. Substrate-binding positions include 75 to 77 (VES) and 94 to 95 (HE).

Belongs to the GTP cyclohydrolase I family. QueF type 1 subfamily.

It is found in the cytoplasm. It carries out the reaction 7-aminomethyl-7-carbaguanine + 2 NADP(+) = 7-cyano-7-deazaguanine + 2 NADPH + 3 H(+). Its pathway is tRNA modification; tRNA-queuosine biosynthesis. Catalyzes the NADPH-dependent reduction of 7-cyano-7-deazaguanine (preQ0) to 7-aminomethyl-7-deazaguanine (preQ1). The chain is NADPH-dependent 7-cyano-7-deazaguanine reductase from Ruegeria pomeroyi (strain ATCC 700808 / DSM 15171 / DSS-3) (Silicibacter pomeroyi).